The sequence spans 465 residues: Na(+)-translocating NADH-quinone reductase subunit A (465 aa).

Belongs to the NqrA family. As to quaternary structure, composed of six subunits; NqrA, NqrB, NqrC, NqrD, NqrE and NqrF.

It carries out the reaction a ubiquinone + n Na(+)(in) + NADH + H(+) = a ubiquinol + n Na(+)(out) + NAD(+). Functionally, NQR complex catalyzes the reduction of ubiquinone-1 to ubiquinol by two successive reactions, coupled with the transport of Na(+) ions from the cytoplasm to the periplasm. NqrA to NqrE are probably involved in the second step, the conversion of ubisemiquinone to ubiquinol. This is Na(+)-translocating NADH-quinone reductase subunit A from Chlamydia trachomatis serovar L2 (strain ATCC VR-902B / DSM 19102 / 434/Bu).